The chain runs to 147 residues: 3-dehydroquinate dehydratase (147 aa).

Tyr-25 functions as the Proton acceptor in the catalytic mechanism. Positions 76, 82, and 89 each coordinate substrate. Residue His-102 is the Proton donor of the active site. Substrate is bound by residues 103-104 and Arg-113; that span reads IS.

Belongs to the type-II 3-dehydroquinase family. As to quaternary structure, homododecamer.

The enzyme catalyses 3-dehydroquinate = 3-dehydroshikimate + H2O. The protein operates within metabolic intermediate biosynthesis; chorismate biosynthesis; chorismate from D-erythrose 4-phosphate and phosphoenolpyruvate: step 3/7. Its function is as follows. Catalyzes a trans-dehydration via an enolate intermediate. The chain is 3-dehydroquinate dehydratase from Mycobacterium tuberculosis (strain ATCC 25177 / H37Ra).